Reading from the N-terminus, the 156-residue chain is Small ribosomal subunit protein uS7 (156 aa).

This sequence belongs to the universal ribosomal protein uS7 family. As to quaternary structure, part of the 30S ribosomal subunit. Contacts proteins S9 and S11.

Its function is as follows. One of the primary rRNA binding proteins, it binds directly to 16S rRNA where it nucleates assembly of the head domain of the 30S subunit. Is located at the subunit interface close to the decoding center, probably blocks exit of the E-site tRNA. The protein is Small ribosomal subunit protein uS7 of Streptomyces griseus subsp. griseus (strain JCM 4626 / CBS 651.72 / NBRC 13350 / KCC S-0626 / ISP 5235).